A 582-amino-acid chain; its full sequence is WD repeat-containing protein JIP5 (582 aa).

5 WD repeats span residues 27–68 (KYPE…EAQS), 125–168 (RHKG…VLSK), 177–216 (DKND…SNQL), 265–310 (DQED…LMDQ), and 373–410 (GPAD…LNSD). Disordered stretches follow at residues 405–496 (ETLN…DTEL) and 531–582 (TKEQ…FDDL). Acidic residues-rich tracts occupy residues 410-438 (DSDD…DDDV) and 447-485 (EVND…ENVT). Composition is skewed to basic and acidic residues over residues 531 to 540 (TKEQSTKKAD) and 570 to 582 (QKHE…FDDL).

The protein belongs to the WD repeat WDR55 family.

The protein resides in the nucleus. Its subcellular location is the nucleolus. The protein is WD repeat-containing protein JIP5 (JIP5) of Debaryomyces hansenii (strain ATCC 36239 / CBS 767 / BCRC 21394 / JCM 1990 / NBRC 0083 / IGC 2968) (Yeast).